Here is a 312-residue protein sequence, read N- to C-terminus: Pseudouridine-5'-phosphate glycosidase (312 aa).

Glu31 (proton donor) is an active-site residue. 2 residues coordinate substrate: Lys93 and Val113. Asp145 is a binding site for Mn(2+). 147 to 149 (SAD) serves as a coordination point for substrate. The active-site Nucleophile is Lys166.

The protein belongs to the pseudouridine-5'-phosphate glycosidase family. Homotrimer. The cofactor is Mn(2+). Requires Fe(2+) as cofactor. Co(2+) serves as cofactor.

The catalysed reaction is D-ribose 5-phosphate + uracil = psi-UMP + H2O. Its activity is regulated as follows. Inhibited by Zn(2+) and Ni(2+). Functionally, catalyzes the reversible cleavage of pseudouridine 5'-phosphate (PsiMP) to ribose 5-phosphate and uracil. Functions biologically in the cleavage direction, as part of a pseudouridine degradation pathway. The protein is Pseudouridine-5'-phosphate glycosidase of Escherichia coli (strain K12).